Reading from the N-terminus, the 83-residue chain is Cytochrome b559 subunit alpha (83 aa).

A helical membrane pass occupies residues 21–35 (VIHSITIPSLFIAGW). Position 23 (histidine 23) interacts with heme.

The protein belongs to the PsbE/PsbF family. In terms of assembly, heterodimer of an alpha subunit and a beta subunit. PSII is composed of 1 copy each of membrane proteins PsbA, PsbB, PsbC, PsbD, PsbE, PsbF, PsbH, PsbI, PsbJ, PsbK, PsbL, PsbM, PsbT, PsbX, PsbY, PsbZ, Psb30/Ycf12, at least 3 peripheral proteins of the oxygen-evolving complex and a large number of cofactors. It forms dimeric complexes. Heme b serves as cofactor.

Its subcellular location is the plastid. It is found in the chloroplast thylakoid membrane. Its function is as follows. This b-type cytochrome is tightly associated with the reaction center of photosystem II (PSII). PSII is a light-driven water:plastoquinone oxidoreductase that uses light energy to abstract electrons from H(2)O, generating O(2) and a proton gradient subsequently used for ATP formation. It consists of a core antenna complex that captures photons, and an electron transfer chain that converts photonic excitation into a charge separation. The polypeptide is Cytochrome b559 subunit alpha (Liriodendron tulipifera (Tuliptree)).